Reading from the N-terminus, the 295-residue chain is Elongation factor Ts (295 aa).

The tract at residues 79-82 (TDFV) is involved in Mg(2+) ion dislocation from EF-Tu.

This sequence belongs to the EF-Ts family.

Its subcellular location is the cytoplasm. In terms of biological role, associates with the EF-Tu.GDP complex and induces the exchange of GDP to GTP. It remains bound to the aminoacyl-tRNA.EF-Tu.GTP complex up to the GTP hydrolysis stage on the ribosome. The protein is Elongation factor Ts of Bacillus cereus (strain G9842).